We begin with the raw amino-acid sequence, 188 residues long: Peptidyl-tRNA hydrolase (188 aa).

Y14 lines the tRNA pocket. The active-site Proton acceptor is the H19. Y64, N66, and N112 together coordinate tRNA.

Belongs to the PTH family. As to quaternary structure, monomer.

The protein localises to the cytoplasm. It catalyses the reaction an N-acyl-L-alpha-aminoacyl-tRNA + H2O = an N-acyl-L-amino acid + a tRNA + H(+). In terms of biological role, hydrolyzes ribosome-free peptidyl-tRNAs (with 1 or more amino acids incorporated), which drop off the ribosome during protein synthesis, or as a result of ribosome stalling. Its function is as follows. Catalyzes the release of premature peptidyl moieties from peptidyl-tRNA molecules trapped in stalled 50S ribosomal subunits, and thus maintains levels of free tRNAs and 50S ribosomes. The sequence is that of Peptidyl-tRNA hydrolase from Bacillus velezensis (strain DSM 23117 / BGSC 10A6 / LMG 26770 / FZB42) (Bacillus amyloliquefaciens subsp. plantarum).